A 464-amino-acid polypeptide reads, in one-letter code: UDP-N-acetylmuramate--L-alanine ligase (464 aa).

ATP is bound at residue 112–118 (GTHGKTT).

This sequence belongs to the MurCDEF family.

It localises to the cytoplasm. The catalysed reaction is UDP-N-acetyl-alpha-D-muramate + L-alanine + ATP = UDP-N-acetyl-alpha-D-muramoyl-L-alanine + ADP + phosphate + H(+). The protein operates within cell wall biogenesis; peptidoglycan biosynthesis. In terms of biological role, cell wall formation. The sequence is that of UDP-N-acetylmuramate--L-alanine ligase from Chromobacterium violaceum (strain ATCC 12472 / DSM 30191 / JCM 1249 / CCUG 213 / NBRC 12614 / NCIMB 9131 / NCTC 9757 / MK).